Consider the following 164-residue polypeptide: Thiol peroxidase (164 aa).

The Thioredoxin domain maps to 18–163 (INEGDFAPDF…FDAALAAYKN (146 aa)). The active-site Cysteine sulfenic acid (-SOH) intermediate is the cysteine 60. Cysteine 60 and cysteine 93 are joined by a disulfide.

Belongs to the peroxiredoxin family. Tpx subfamily. In terms of assembly, homodimer.

The catalysed reaction is a hydroperoxide + [thioredoxin]-dithiol = an alcohol + [thioredoxin]-disulfide + H2O. Thiol-specific peroxidase that catalyzes the reduction of hydrogen peroxide and organic hydroperoxides to water and alcohols, respectively. Plays a role in cell protection against oxidative stress by detoxifying peroxides. This is Thiol peroxidase from Staphylococcus aureus (strain Mu50 / ATCC 700699).